Reading from the N-terminus, the 432-residue chain is Anaerobic glycerol-3-phosphate dehydrogenase subunit B (432 aa).

This sequence belongs to the anaerobic G-3-P dehydrogenase subunit B family. In terms of assembly, composed of a catalytic GlpA/B dimer and of membrane bound GlpC. FMN serves as cofactor.

It carries out the reaction a quinone + sn-glycerol 3-phosphate = dihydroxyacetone phosphate + a quinol. Its pathway is polyol metabolism; glycerol degradation via glycerol kinase pathway; glycerone phosphate from sn-glycerol 3-phosphate (anaerobic route): step 1/1. In terms of biological role, conversion of glycerol 3-phosphate to dihydroxyacetone. Uses fumarate or nitrate as electron acceptor. In Haemophilus influenzae (strain ATCC 51907 / DSM 11121 / KW20 / Rd), this protein is Anaerobic glycerol-3-phosphate dehydrogenase subunit B (glpB).